The following is a 419-amino-acid chain: Oligouridylate-binding protein 1B (419 aa).

2 consecutive RRM domains span residues 54–128 and 139–217; these read RSVY…WAYA and FNIF…WATK. Residues 217–257 are disordered; that stretch reads KGATSGEDKQSSDSKSVVELTSGVSEDGKDTTNGEAPENNA. Position 241 is a phosphoserine (S241). The RRM 3 domain occupies 260 to 335; sequence TTVYVGNLAP…RQMKCSWGSK (76 aa).

In terms of assembly, interacts with UBA1A and UBA2A.

The protein resides in the nucleus. Functionally, heterogeneous nuclear ribonucleoprotein (hnRNP)-like protein that acts as a component of the pre-mRNA processing machinery. Functions to facilitate the nuclear maturation of plant pre-mRNAs. In Arabidopsis thaliana (Mouse-ear cress), this protein is Oligouridylate-binding protein 1B (UBP1B).